Reading from the N-terminus, the 264-residue chain is uncharacterized protein (264 aa).

Disordered stretches follow at residues 1-52 (MPRS…AVPG) and 123-207 (GGRW…PWTR). Residues 29–40 (AAHPTTSPTAAS) are compositionally biased toward low complexity. Residues 144 to 154 (HFQSSGAQQES) show a composition bias toward polar residues. Residues 188-197 (ARKSACKCPR) are compositionally biased toward basic residues.

This is an uncharacterized protein from Homo sapiens (Human).